A 239-amino-acid polypeptide reads, in one-letter code: Phosducin-like protein 3 (239 aa).

The tract at residues 16–37 (KKGILPPKETPVEEEEDEQLHL) is disordered. One can recognise a Phosducin domain in the interval 28 to 201 (EEEEDEQLHL…LEWRLSESGA (174 aa)). Ser41 is modified (phosphoserine). Residues 89-239 (FGELKEISGQ…RDGEEDSDED (151 aa)) are thioredoxin fold. The segment covering 217 to 227 (QLMTSIRCSAN) has biased composition (polar residues). The tract at residues 217-239 (QLMTSIRCSANTHRDGEEDSDED) is disordered.

This sequence belongs to the phosducin family. Interacts (via thioredoxin fold region) with kdr/vegfr2 (via juxtamembrane domain). As to expression, expressed in endothelial cells.

It localises to the cytoplasm. The protein resides in the perinuclear region. The protein localises to the endoplasmic reticulum. In terms of biological role, acts as a chaperone for the angiogenic VEGF receptor KDR/VEGFR2, increasing its abundance by inhibiting its ubiquitination and degradation. Inhibits the folding activity of the chaperonin-containing T-complex (CCT) which leads to inhibition of cytoskeletal actin folding. Acts as a chaperone during heat shock alongside HSP90 and HSP40/70 chaperone complexes. Modulates the activation of caspases during apoptosis. In Danio rerio (Zebrafish), this protein is Phosducin-like protein 3.